The following is a 294-amino-acid chain: Small ribosomal subunit protein uS2 (294 aa).

The interval 232–294 is disordered; it reads RATGTTEAPE…SAAGEADAAK (63 aa). Over residues 246–259 the composition is skewed to basic and acidic residues; that stretch reads EWERELLEGSKSEE. The segment covering 260-294 has biased composition (low complexity); the sequence is AAAPAAAEEAPAAAEEAPAAAEATESAAGEADAAK.

The protein belongs to the universal ribosomal protein uS2 family.

This is Small ribosomal subunit protein uS2 from Arthrobacter sp. (strain FB24).